We begin with the raw amino-acid sequence, 171 residues long: MDLKTLIREIPDFPKPGILFRDYTTVLKDPQGWRYSIDRLTELIKPLEPTAIVGIESRGFILGAPLAYQLGLGFVPVRKPGKLPADTHSVEYELEYGSDRLEIHQDALAPGDRVVVVDDLIATGGTASATATLIDRCSATLAGFAFVIELEGLNGRDRLPEVPIISLVSYD.

This sequence belongs to the purine/pyrimidine phosphoribosyltransferase family. As to quaternary structure, homodimer.

The protein resides in the cytoplasm. It carries out the reaction AMP + diphosphate = 5-phospho-alpha-D-ribose 1-diphosphate + adenine. It participates in purine metabolism; AMP biosynthesis via salvage pathway; AMP from adenine: step 1/1. Catalyzes a salvage reaction resulting in the formation of AMP, that is energically less costly than de novo synthesis. The polypeptide is Adenine phosphoribosyltransferase (Synechococcus sp. (strain ATCC 27144 / PCC 6301 / SAUG 1402/1) (Anacystis nidulans)).